The following is an 808-amino-acid chain: Disks large-associated protein 5 (808 aa).

Phosphoserine is present on residues serine 66 and serine 70. The stretch at 88–119 forms a coiled coil; that stretch reads QRKQLLQKYKEEKQLQKLKEQREKAKRGVFKV. The tract at residues 134-282 is disordered; it reads QRGAKAEPEK…QTRETSEMGP (149 aa). 2 stretches are compositionally biased toward basic and acidic residues: residues 135–145 and 180–193; these read RGAKAEPEKAF and QTSE…ERKV. Position 201 is a phosphoserine (serine 201). Basic and acidic residues-rich tracts occupy residues 232–241 and 249–278; these read TNEKGSERMR and KKPE…RETS. Position 328 is a phosphoserine (serine 328). Phosphothreonine occurs at positions 337 and 386. A disordered region spans residues 377–413; the sequence is HVLNQKGASTSDSNHASVKGVPCSEGSEGQTSQPPHD. The span at 382-392 shows a compositional bias: polar residues; sequence KGASTSDSNHA. Serine 598 carries the phosphoserine modification. Residue serine 607 is modified to Phosphoserine; by AURKA. Serine 612 is modified (phosphoserine). A Phosphothreonine modification is found at threonine 617. A Phosphoserine modification is found at serine 620. The interval 629-654 is disordered; that stretch reads RAAGDLLRQKMPLKKPDPQSSKSEHV. A compositionally biased stretch (basic and acidic residues) spans 642 to 654; sequence KKPDPQSSKSEHV. Threonine 728 carries the post-translational modification Phosphothreonine. Residues 735-757 form a disordered region; the sequence is SNPETNTSSQSNTSQEEAEASQS. Serine 743 bears the Phosphoserine mark. Serine 797 bears the Phosphoserine; by AURKA mark. Phosphoserine is present on serine 806.

This sequence belongs to the SAPAP family. In terms of assembly, interacts with CDC2. Interacts with the C-terminal proline-rich region of FBXO7. Recruited by FBXO7 to a SCF (SKP1-CUL1-F-box) protein complex in a CDC2/Cyclin B-phosphorylation dependent manner. Interacts with CDH1. Ubiquitinated, leading to its degradation. In terms of processing, decreased phosphorylation levels are associated with the differentiation of intestinal epithelial cells. As to expression, expressed at low levels in normal resting liver. Up-regulated in regenerating liver after partial hepatectomy.

It is found in the nucleus. Its subcellular location is the cytoplasm. The protein localises to the cytoskeleton. It localises to the spindle. In terms of biological role, potential cell cycle regulator that may play a role in carcinogenesis of cancer cells. Mitotic phosphoprotein regulated by the ubiquitin-proteasome pathway. Key regulator of adherens junction integrity and differentiation that may be involved in CDH1-mediated adhesion and signaling in epithelial cells. The chain is Disks large-associated protein 5 (Dlgap5) from Mus musculus (Mouse).